The sequence spans 477 residues: Ribulose bisphosphate carboxylase large chain (477 aa).

A propeptide spanning residues 1 to 2 is cleaved from the precursor; the sequence is MS. An N-acetylproline modification is found at P3. K14 bears the N6,N6,N6-trimethyllysine mark. 2 residues coordinate substrate: N123 and T173. K175 serves as the catalytic Proton acceptor. K177 is a substrate binding site. The Mg(2+) site is built by K201, D203, and E204. K201 is subject to N6-carboxylysine. H294 acts as the Proton acceptor in catalysis. Substrate is bound by residues R295, H327, and S379.

It belongs to the RuBisCO large chain family. Type I subfamily. Heterohexadecamer of 8 large chains and 8 small chains; disulfide-linked. The disulfide link is formed within the large subunit homodimers. It depends on Mg(2+) as a cofactor. The disulfide bond which can form in the large chain dimeric partners within the hexadecamer appears to be associated with oxidative stress and protein turnover.

It is found in the plastid. The protein resides in the chloroplast. The enzyme catalyses 2 (2R)-3-phosphoglycerate + 2 H(+) = D-ribulose 1,5-bisphosphate + CO2 + H2O. It catalyses the reaction D-ribulose 1,5-bisphosphate + O2 = 2-phosphoglycolate + (2R)-3-phosphoglycerate + 2 H(+). Functionally, ruBisCO catalyzes two reactions: the carboxylation of D-ribulose 1,5-bisphosphate, the primary event in carbon dioxide fixation, as well as the oxidative fragmentation of the pentose substrate in the photorespiration process. Both reactions occur simultaneously and in competition at the same active site. This Nicotiana acuminata (Acuminate tobacco) protein is Ribulose bisphosphate carboxylase large chain.